The sequence spans 268 residues: Phosphatidylglycerol--prolipoprotein diacylglyceryl transferase (268 aa).

Helical transmembrane passes span 25-45 (WYGV…TKVF), 57-77 (YLFY…HCFF), and 93-113 (VWHG…AVYF). An a 1,2-diacyl-sn-glycero-3-phospho-(1'-sn-glycerol)-binding site is contributed by arginine 142. Helical transmembrane passes span 151-171 (IIGI…DLLP), 175-195 (VQLY…LAYW), 204-224 (GLLL…LEFF), and 236-256 (PLSV…LLIF).

This sequence belongs to the Lgt family.

The protein localises to the cell inner membrane. It carries out the reaction L-cysteinyl-[prolipoprotein] + a 1,2-diacyl-sn-glycero-3-phospho-(1'-sn-glycerol) = an S-1,2-diacyl-sn-glyceryl-L-cysteinyl-[prolipoprotein] + sn-glycerol 1-phosphate + H(+). Its pathway is protein modification; lipoprotein biosynthesis (diacylglyceryl transfer). Its function is as follows. Catalyzes the transfer of the diacylglyceryl group from phosphatidylglycerol to the sulfhydryl group of the N-terminal cysteine of a prolipoprotein, the first step in the formation of mature lipoproteins. The protein is Phosphatidylglycerol--prolipoprotein diacylglyceryl transferase of Chloroherpeton thalassium (strain ATCC 35110 / GB-78).